The following is a 136-amino-acid chain: MKILKKLKKKLEKEESKILVDTSVLIDYFKKRRLEELGGEAISIITAVEFIRGISEHKQEQVLNIFKELFEIVYIDEEIIIPFSKIYRQLKKRGMLIDDADLYIACTAIIKNYPLWTKNKKHFERLKEFGLKIYDK.

A PINc domain is found at 18–129 (ILVDTSVLID…KKHFERLKEF (112 aa)). Mg(2+) contacts are provided by aspartate 21 and aspartate 101.

This sequence belongs to the PINc/VapC protein family. It depends on Mg(2+) as a cofactor.

Its function is as follows. Toxic component of a type II toxin-antitoxin (TA) system. An RNase. Its cognate antitoxin is VapB1. This is Ribonuclease VapC1 from Methanocaldococcus jannaschii (strain ATCC 43067 / DSM 2661 / JAL-1 / JCM 10045 / NBRC 100440) (Methanococcus jannaschii).